The following is a 318-amino-acid chain: Methionyl-tRNA formyltransferase (318 aa).

Residue 112–115 coordinates (6S)-5,6,7,8-tetrahydrofolate; the sequence is SILP.

Belongs to the Fmt family.

It carries out the reaction L-methionyl-tRNA(fMet) + (6R)-10-formyltetrahydrofolate = N-formyl-L-methionyl-tRNA(fMet) + (6S)-5,6,7,8-tetrahydrofolate + H(+). Functionally, attaches a formyl group to the free amino group of methionyl-tRNA(fMet). The formyl group appears to play a dual role in the initiator identity of N-formylmethionyl-tRNA by promoting its recognition by IF2 and preventing the misappropriation of this tRNA by the elongation apparatus. In Haemophilus influenzae (strain ATCC 51907 / DSM 11121 / KW20 / Rd), this protein is Methionyl-tRNA formyltransferase.